Consider the following 412-residue polypeptide: Lysosomal phospholipase A and acyltransferase (412 aa).

The first 33 residues, 1 to 33, serve as a signal peptide directing secretion; sequence MGLHLRPYRVGLLPDGLLFLLLLLMLLADPALP. Residue aspartate 46 coordinates substrate. A disulfide bridge links cysteine 65 with cysteine 89. Asparagine 99 carries an N-linked (GlcNAc...) asparagine glycan. The active-site Acyl-ester intermediate is the serine 198. Serine 198 contributes to the Zn(2+) binding site. Methionine 199 lines the substrate pocket. Residues asparagine 273 and asparagine 289 are each glycosylated (N-linked (GlcNAc...) asparagine). Aspartate 340 and cysteine 355 together coordinate Zn(2+). Catalysis depends on charge relay system residues aspartate 360 and histidine 392. Residue histidine 392 coordinates Zn(2+). A glycan (N-linked (GlcNAc...) asparagine) is linked at asparagine 398.

Belongs to the AB hydrolase superfamily. Lipase family. Post-translationally, N-glycosylated. N-glycosylation is important for maturation of the enzyme and normal subcellular location. In terms of tissue distribution, detected in blood plasma (at protein level). Ubiquitous. Highly expressed in heart, placenta, skeletal muscle, kidney and pancreas. Detected at lower levels in spleen, thymus, prostate, testis, ovary, small intestine, colon and peripheral blood leukocytes.

It is found in the lysosome. It localises to the secreted. The protein resides in the membrane. It carries out the reaction a 1,2-diacyl-sn-glycero-3-phosphocholine + H2O = a 2-acyl-sn-glycero-3-phosphocholine + a fatty acid + H(+). The catalysed reaction is 1-hexadecanoyl-2-(9Z-octadecenoyl)-sn-glycero-3-phosphocholine + H2O = 2-(9Z-octadecenoyl)-sn-glycero-3-phosphocholine + hexadecanoate + H(+). It catalyses the reaction 1-hexadecanoyl-2-glutaroyl-sn-glycero-3-phosphocholine + H2O = 2-glutaroyl-sn-glycero-3-phosphocholine + hexadecanoate + H(+). The enzyme catalyses 1-hexadecanoyl-2-nonadioyl-sn-glycero-3-phosphocholine + H2O = 2-nonadioyl-sn-glycero-3-phosphocholine + hexadecanoate + H(+). It carries out the reaction 1-hexadecanoyl-2-(5-oxopentanoyl)-sn-glycero-3-phosphocholine + H2O = 2-(5-oxopentanoyl)-sn-glycero-3-phosphocholine + hexadecanoate + H(+). The catalysed reaction is 1-hexadecanoyl-2-(9-oxononanoyl)-sn-glycero-3-phosphocholine + H2O = 2-(9-oxononanoyl)-sn-glycero-3-phosphocholine + hexadecanoate + H(+). It catalyses the reaction 1,2-dihexadecanoyl-sn-glycero-3-phosphocholine + H2O = 2-hexadecanoyl-sn-glycero-3-phosphocholine + hexadecanoate + H(+). The enzyme catalyses a 1,2-diacyl-sn-glycero-3-phosphocholine + H2O = a 1-acyl-sn-glycero-3-phosphocholine + a fatty acid + H(+). It carries out the reaction 1,2-di-(9Z-octadecenoyl)-sn-glycero-3-phosphocholine + H2O = 1-(9Z-octadecenoyl)-sn-glycero-3-phosphocholine + (9Z)-octadecenoate + H(+). The catalysed reaction is 1-hexadecanoyl-2-(9Z-octadecenoyl)-sn-glycero-3-phosphocholine + H2O = 1-hexadecanoyl-sn-glycero-3-phosphocholine + (9Z)-octadecenoate + H(+). It catalyses the reaction 1,2-dihexadecanoyl-sn-glycero-3-phosphocholine + H2O = 1-hexadecanoyl-sn-glycero-3-phosphocholine + hexadecanoate + H(+). The enzyme catalyses a 1-acyl-sn-glycero-3-phosphocholine + H2O = sn-glycerol 3-phosphocholine + a fatty acid + H(+). It carries out the reaction 1-hexadecanoyl-sn-glycero-3-phosphocholine + H2O = sn-glycerol 3-phosphocholine + hexadecanoate + H(+). The catalysed reaction is N-(acetyl)-sphing-4-enine + a 1,2-diacyl-sn-glycero-3-phosphoethanolamine = 1-O-acyl-N-(acetyl)-sphing-4-enine + a 2-acyl-sn-glycero-3-phosphoethanolamine. It catalyses the reaction 1-hexadecanoyl-2-(9Z-octadecenoyl)-sn-glycero-3-phosphoethanolamine + N-(acetyl)-sphing-4-enine = 2-(9Z-octadecenoyl)-sn-glycero-3-phosphoethanolamine + 1-hexadecanoyl-N-(acetyl)-sphing-4-enine. The enzyme catalyses 1-hexadecanoyl-2-(9Z,12Z-octadecadienoyl)-sn-glycero-3-phosphoethanolamine + N-(acetyl)-sphing-4-enine = 2-(9Z,12Z)-octadecadienoyl-sn-glycero-3-phosphoethanolamine + 1-hexadecanoyl-N-(acetyl)-sphing-4-enine. It carries out the reaction 1-hexadecanoyl-2-(5Z,8Z,11Z,14Z-eicosatetraenoyl)-sn-glycero-3-phosphoethanolamine + N-(acetyl)-sphing-4-enine = 2-(5Z,8Z,11Z,14Z)-eicosatetraenoyl-sn-glycero-3-phosphoethanolamine + 1-hexadecanoyl-N-(acetyl)-sphing-4-enine. The catalysed reaction is N-(acetyl)-sphing-4-enine + a 1,2-diacyl-sn-glycero-3-phosphoethanolamine = 1-O-acyl-N-(acetyl)-sphing-4-enine + a 1-acyl-sn-glycero-3-phosphoethanolamine. It catalyses the reaction 1-hexadecanoyl-2-(9Z-octadecenoyl)-sn-glycero-3-phosphoethanolamine + N-(acetyl)-sphing-4-enine = 1-(9Z-octadecenoyl)-N-(acetyl)-sphing-4-enine + 1-hexadecanoyl-sn-glycero-3-phosphoethanolamine. The enzyme catalyses 1-hexadecanoyl-2-(9Z,12Z-octadecadienoyl)-sn-glycero-3-phosphoethanolamine + N-(acetyl)-sphing-4-enine = 1-(9Z,12Z-octadecadienoyl)-N-acetylsphing-4-enine + 1-hexadecanoyl-sn-glycero-3-phosphoethanolamine. It carries out the reaction 1-hexadecanoyl-2-(5Z,8Z,11Z,14Z-eicosatetraenoyl)-sn-glycero-3-phosphoethanolamine + N-(acetyl)-sphing-4-enine = 1-(5Z,8Z,11Z,14Z)-eicosatetraenoyl-N-(acetyl)-sphing-4-enine + 1-hexadecanoyl-sn-glycero-3-phosphoethanolamine. The catalysed reaction is N-(acetyl)-sphing-4-enine + a 1,2-diacyl-sn-glycero-3-phosphocholine = 1-O-acyl-N-(acetyl)-sphing-4-enine + a 1-acyl-sn-glycero-3-phosphocholine. It catalyses the reaction 1-hexadecanoyl-2-(9Z-octadecenoyl)-sn-glycero-3-phosphocholine + N-(acetyl)-sphing-4-enine = 1-(9Z-octadecenoyl)-N-(acetyl)-sphing-4-enine + 1-hexadecanoyl-sn-glycero-3-phosphocholine. The enzyme catalyses 1-hexadecanoyl-2-(9Z,12Z-octadecadienoyl)-sn-glycero-3-phosphocholine + N-(acetyl)-sphing-4-enine = 1-(9Z,12Z-octadecadienoyl)-N-acetylsphing-4-enine + 1-hexadecanoyl-sn-glycero-3-phosphocholine. It carries out the reaction 1-hexadecanoyl-2-(5Z,8Z,11Z,14Z-eicosatetraenoyl)-sn-glycero-3-phosphocholine + N-(acetyl)-sphing-4-enine = 1-(5Z,8Z,11Z,14Z)-eicosatetraenoyl-N-(acetyl)-sphing-4-enine + 1-hexadecanoyl-sn-glycero-3-phosphocholine. The catalysed reaction is 1-hexadecanoyl-2-(4Z,7Z,10Z,13Z,16Z,19Z-docosahexaenoyl)-sn-glycero-3-phosphocholine + N-(acetyl)-sphing-4-enine = 1-(4Z,7Z,10Z,13Z,16Z,19Z-docosahexaenoyl)-N-(acetyl)-sphing-4-enine + 1-hexadecanoyl-sn-glycero-3-phosphocholine. It catalyses the reaction 1-octadecanoyl-2-(9Z-octadecenoyl)-sn-glycero-3-phosphocholine + N-(acetyl)-sphing-4-enine = 1-(9Z-octadecenoyl)-N-(acetyl)-sphing-4-enine + 1-octadecanoyl-sn-glycero-3-phosphocholine. The enzyme catalyses 1-octadecanoyl-2-(9Z,12Z)-octadecadienoyl-sn-glycero-3-phosphocholine + N-(acetyl)-sphing-4-enine = 1-(9Z,12Z-octadecadienoyl)-N-acetylsphing-4-enine + 1-octadecanoyl-sn-glycero-3-phosphocholine. It carries out the reaction 1-octadecanoyl-2-(5Z,8Z,11Z,14Z-eicosatetraenoyl)-sn-glycero-3-phosphocholine + N-(acetyl)-sphing-4-enine = 1-(5Z,8Z,11Z,14Z)-eicosatetraenoyl-N-(acetyl)-sphing-4-enine + 1-octadecanoyl-sn-glycero-3-phosphocholine. The catalysed reaction is 1-(9Z-octadecenoyl)-2-hexadecanoyl-sn-glycero-3-phosphocholine + N-(acetyl)-sphing-4-enine = 1-hexadecanoyl-N-(acetyl)-sphing-4-enine + 1-(9Z-octadecenoyl)-sn-glycero-3-phosphocholine. It catalyses the reaction 1-(9Z)-octadecenoyl-2-octadecanoyl-sn-glycero-3-phosphocholine + N-(acetyl)-sphing-4-enine = 1-octadecanoyl-N-(acetyl)-sphing-4-enine + 1-(9Z-octadecenoyl)-sn-glycero-3-phosphocholine. The enzyme catalyses 1,2-di-(9Z-octadecenoyl)-sn-glycero-3-phosphocholine + N-(acetyl)-sphing-4-enine = 1-(9Z-octadecenoyl)-N-(acetyl)-sphing-4-enine + 1-(9Z-octadecenoyl)-sn-glycero-3-phosphocholine. It carries out the reaction N-(acetyl)-sphing-4-enine + a 1,2-diacyl-sn-glycero-3-phosphocholine = 1-O-acyl-N-(acetyl)-sphing-4-enine + a 2-acyl-sn-glycero-3-phosphocholine. The catalysed reaction is 1-hexadecanoyl-2-(9Z-octadecenoyl)-sn-glycero-3-phosphocholine + N-(acetyl)-sphing-4-enine = 1-hexadecanoyl-N-(acetyl)-sphing-4-enine + 2-(9Z-octadecenoyl)-sn-glycero-3-phosphocholine. It catalyses the reaction 1-hexadecanoyl-2-(9Z,12Z-octadecadienoyl)-sn-glycero-3-phosphocholine + N-(acetyl)-sphing-4-enine = 2-(9Z,12Z-octadecadienoyl)-sn-glycero-3-phosphocholine + 1-hexadecanoyl-N-(acetyl)-sphing-4-enine. The enzyme catalyses 1-hexadecanoyl-2-(5Z,8Z,11Z,14Z-eicosatetraenoyl)-sn-glycero-3-phosphocholine + N-(acetyl)-sphing-4-enine = 1-hexadecanoyl-N-(acetyl)-sphing-4-enine + 2-(5Z,8Z,11Z,14Z)-eicosatetraenoyl-sn-glycero-3-phosphocholine. It carries out the reaction 1-hexadecanoyl-2-(4Z,7Z,10Z,13Z,16Z,19Z-docosahexaenoyl)-sn-glycero-3-phosphocholine + N-(acetyl)-sphing-4-enine = 2-(4Z,7Z,10Z,13Z,16Z,19Z-docosahexaenoyl)-sn-glycero-3-phosphocholine + 1-hexadecanoyl-N-(acetyl)-sphing-4-enine. The catalysed reaction is 1-hexadecanoyl-2-nonadioyl-sn-glycero-3-phosphocholine + N-(acetyl)-sphing-4-enine = 2-nonadioyl-sn-glycero-3-phosphocholine + 1-hexadecanoyl-N-(acetyl)-sphing-4-enine. It catalyses the reaction 1-octadecanoyl-2-(9Z-octadecenoyl)-sn-glycero-3-phosphocholine + N-(acetyl)-sphing-4-enine = 1-octadecanoyl-N-(acetyl)-sphing-4-enine + 2-(9Z-octadecenoyl)-sn-glycero-3-phosphocholine. The enzyme catalyses 1-octadecanoyl-2-(5Z,8Z,11Z,14Z-eicosatetraenoyl)-sn-glycero-3-phosphocholine + N-(acetyl)-sphing-4-enine = 1-octadecanoyl-N-(acetyl)-sphing-4-enine + 2-(5Z,8Z,11Z,14Z)-eicosatetraenoyl-sn-glycero-3-phosphocholine. It carries out the reaction 1-(9Z-octadecenoyl)-2-hexadecanoyl-sn-glycero-3-phosphocholine + N-(acetyl)-sphing-4-enine = 1-(9Z-octadecenoyl)-N-(acetyl)-sphing-4-enine + 2-hexadecanoyl-sn-glycero-3-phosphocholine. The catalysed reaction is 1-(9Z)-octadecenoyl-2-octadecanoyl-sn-glycero-3-phosphocholine + N-(acetyl)-sphing-4-enine = 2-octadecanoyl-sn-glycero-3-phosphocholine + 1-(9Z-octadecenoyl)-N-(acetyl)-sphing-4-enine. It catalyses the reaction a 1,2-diacyl-sn-glycero-3-phospho-L-serine + N-(acetyl)-sphing-4-enine = a 2-acyl-sn-glycero-3-phospho-L-serine + 1-O-acyl-N-(acetyl)-sphing-4-enine. The enzyme catalyses 1-octadecanoyl-2-(9Z-octadecenoyl)-sn-glycero-3-phospho-L-serine + N-(acetyl)-sphing-4-enine = 2-(9Z-octadecenoyl)-sn-glycero-3-phospho-L-serine + 1-octadecanoyl-N-(acetyl)-sphing-4-enine. It carries out the reaction a 1,2-diacyl-sn-glycero-3-phospho-L-serine + N-(acetyl)-sphing-4-enine = 1-O-acyl-N-(acetyl)-sphing-4-enine + a 1-acyl-sn-glycero-3-phospho-L-serine. The catalysed reaction is 1-octadecanoyl-2-(9Z-octadecenoyl)-sn-glycero-3-phospho-L-serine + N-(acetyl)-sphing-4-enine = 1-octadecanoyl-sn-glycero-3-phosphoserine + 1-(9Z-octadecenoyl)-N-(acetyl)-sphing-4-enine. It catalyses the reaction a 1,2-diacyl-sn-glycero-3-phospho-(1'-sn-glycerol) + N-(acetyl)-sphing-4-enine = 2-acyl-sn-glycero-3-phospho-(1'-sn-glycerol) + 1-O-acyl-N-(acetyl)-sphing-4-enine. The enzyme catalyses 1-octadecanoyl-2-(9Z-octadecenoyl)-sn-glycero-3-phospho-(1'-sn-glycerol) + N-(acetyl)-sphing-4-enine = 2-(9Z-octadecenoyl)-sn-glycero-3-phospho-(1'-sn-glycerol) + 1-octadecanoyl-N-(acetyl)-sphing-4-enine. It carries out the reaction a 1,2-diacyl-sn-glycero-3-phospho-(1'-sn-glycerol) + N-(acetyl)-sphing-4-enine = 1-O-acyl-N-(acetyl)-sphing-4-enine + 1-acyl-sn-glycero-3-phospho-(1'-sn-glycerol). The catalysed reaction is 1-octadecanoyl-2-(9Z-octadecenoyl)-sn-glycero-3-phospho-(1'-sn-glycerol) + N-(acetyl)-sphing-4-enine = 1-octadecanoyl-sn-glycero-3-phospho-(1'-sn-glycerol) + 1-(9Z-octadecenoyl)-N-(acetyl)-sphing-4-enine. It catalyses the reaction an N-acylethanolamine + a 1,2-diacyl-sn-glycero-3-phosphocholine = 2-(acylamino)ethyl fatty acid + a 2-acyl-sn-glycero-3-phosphocholine. The enzyme catalyses an N-acylethanolamine + a 1,2-diacyl-sn-glycero-3-phosphocholine = 2-(acylamino)ethyl fatty acid + a 1-acyl-sn-glycero-3-phosphocholine. It carries out the reaction N-(5Z,8Z,11Z,14Z-eicosatetraenoyl)-ethanolamine + 1,2-di-(9Z-octadecenoyl)-sn-glycero-3-phosphocholine = 2-[(5Z,8Z,11Z,14Z)-eicosatetraenoylamino]ethyl (9Z)-octadecenoate + (9Z-octadecenoyl)-sn-glycero-3-phosphocholine. The catalysed reaction is N-(9Z-octadecenoyl) ethanolamine + 1,2-di-(9Z-octadecenoyl)-sn-glycero-3-phosphocholine = 2-[(9Z)-octadecenoylamino]ethyl (9Z)-octadecenoate + (9Z-octadecenoyl)-sn-glycero-3-phosphocholine. It catalyses the reaction a 3-acyl-sn-glycerol + a 1,2-diacyl-sn-glycero-3-phosphocholine = a 1,3-diacylglycerol + a 1-acyl-sn-glycero-3-phosphocholine. The enzyme catalyses a 3-acyl-sn-glycerol + a 1,2-diacyl-sn-glycero-3-phosphocholine = a 1,3-diacylglycerol + a 2-acyl-sn-glycero-3-phosphocholine. It carries out the reaction 3-(9Z-octadecenoyl)-sn-glycerol + 1,2-di-(9Z-octadecenoyl)-sn-glycero-3-phosphocholine = 1,3-di-(9Z-octadecenoyl)-glycerol + (9Z-octadecenoyl)-sn-glycero-3-phosphocholine. The catalysed reaction is 3-hexadecanoyl-sn-glycerol + 1,2-di-(9Z-octadecenoyl)-sn-glycero-3-phosphocholine = 1-(9Z)-octadecenoyl-3-hexadecanoyl-sn-glycerol + (9Z-octadecenoyl)-sn-glycero-3-phosphocholine. It catalyses the reaction a 1-acyl-sn-glycerol + a 1,2-diacyl-sn-glycero-3-phosphocholine = a 1,3-diacylglycerol + a 2-acyl-sn-glycero-3-phosphocholine. The enzyme catalyses a 1-acyl-sn-glycerol + a 1,2-diacyl-sn-glycero-3-phosphocholine = a 1,3-diacylglycerol + a 1-acyl-sn-glycero-3-phosphocholine. It carries out the reaction 1-(9Z-octadecenoyl)-sn-glycerol + 1,2-di-(9Z-octadecenoyl)-sn-glycero-3-phosphocholine = 1,3-di-(9Z-octadecenoyl)-glycerol + (9Z-octadecenoyl)-sn-glycero-3-phosphocholine. The catalysed reaction is 1-hexadecanoyl-sn-glycerol + 1,2-di-(9Z-octadecenoyl)-sn-glycero-3-phosphocholine = 1-hexadecanoyl-3-(9Z)-octadecenoyl-sn-glycerol + (9Z-octadecenoyl)-sn-glycero-3-phosphocholine. It catalyses the reaction a 2-acylglycerol + a 1,2-diacyl-sn-glycero-3-phosphocholine = a 1,2-diacylglycerol + a 2-acyl-sn-glycero-3-phosphocholine. The enzyme catalyses a 2-acylglycerol + a 1,2-diacyl-sn-glycero-3-phosphocholine = a 1,2-diacylglycerol + a 1-acyl-sn-glycero-3-phosphocholine. It carries out the reaction 2-hexadecanoylglycerol + 1,2-di-(9Z-octadecenoyl)-sn-glycero-3-phosphocholine = 1-(9Z)-octadecenoyl-2-hexadecanoylglycerol + (9Z-octadecenoyl)-sn-glycero-3-phosphocholine. The catalysed reaction is 1-O-alkylglycerol + a 1,2-diacyl-sn-glycero-3-phosphocholine = 1-O-alkyl-3-acylglycerol + a 1-acyl-sn-glycero-3-phosphocholine. It catalyses the reaction 1-O-alkylglycerol + a 1,2-diacyl-sn-glycero-3-phosphocholine = 1-O-alkyl-3-acylglycerol + a 2-acyl-sn-glycero-3-phosphocholine. The enzyme catalyses 1-O-hexadecylglycerol + 1,2-di-(9Z-octadecenoyl)-sn-glycero-3-phosphocholine = 1-O-hexadecyl-3-(9Z)-octadecenoylglycerol + (9Z-octadecenoyl)-sn-glycero-3-phosphocholine. It carries out the reaction 1-O-alkyl-2-acyl-sn-glycerol + a 1,2-diacyl-sn-glycero-3-phosphocholine = 1-O-alkyl-2,3-diacyl-sn-glycerol + a 2-acyl-sn-glycero-3-phosphocholine. The catalysed reaction is 1-O-alkyl-2-acyl-sn-glycerol + a 1,2-diacyl-sn-glycero-3-phosphocholine = 1-O-alkyl-2,3-diacyl-sn-glycerol + a 1-acyl-sn-glycero-3-phosphocholine. It catalyses the reaction 1-O-hexadecyl-2-acetyl-sn-glycerol + 1,2-di-(9Z-octadecenoyl)-sn-glycero-3-phosphocholine = 1-O-hexadecyl-2-acetyl-3-(9Z)-octadecenoyl-sn-glycerol + (9Z-octadecenoyl)-sn-glycero-3-phosphocholine. The enzyme catalyses 1-O-hexadecyl-2-O-methyl-sn-glycerol + 1,2-di-(9Z-octadecenoyl)-sn-glycero-3-phosphocholine = 1-O-hexadecyl-2-O-methyl-3-(9Z)-octadecenoyl-sn-glycerol + (9Z-octadecenoyl)-sn-glycero-3-phosphocholine. It carries out the reaction a 1,2-diacyl-sn-glycero-3-phosphoethanolamine + H2O = a 1-acyl-sn-glycero-3-phosphoethanolamine + a fatty acid + H(+). The catalysed reaction is 1-acyl-2-(5Z,8Z,11Z,14Z)-eicosatetraenoyl-sn-glycero-3-phosphoethanolamine + H2O = a 1-acyl-sn-glycero-3-phosphoethanolamine + (5Z,8Z,11Z,14Z)-eicosatetraenoate + H(+). It catalyses the reaction a 1,2-diacyl-sn-glycero-3-phospho-(1'-sn-glycerol) + H2O = 1-acyl-sn-glycero-3-phospho-(1'-sn-glycerol) + a fatty acid + H(+). The enzyme catalyses 1-hexadecanoyl-2-(9Z-octadecenoyl)-sn-glycero-3-phospho-(1'-sn-glycerol) + H2O = 1-hexadecanoyl-sn-glycero-3-phospho-(1'-sn-glycerol) + (9Z)-octadecenoate + H(+). It carries out the reaction a 1,2-diacyl-sn-glycero-3-phospho-(1'-sn-glycerol) + H2O = 2-acyl-sn-glycero-3-phospho-(1'-sn-glycerol) + a fatty acid + H(+). The catalysed reaction is 1-hexadecanoyl-2-(9Z-octadecenoyl)-sn-glycero-3-phospho-(1'-sn-glycerol) + H2O = 2-(9Z-octadecenoyl)-sn-glycero-3-phospho-(1'-sn-glycerol) + hexadecanoate + H(+). With respect to regulation, inhibited by zinc ions at neutral pH. Zinc ions in plasma may keep the enzyme from hydrolyzing inappropriate substrates. Functionally, has dual calcium-independent phospholipase and O-acyltransferase activities with a potential role in glycerophospholipid homeostasis and remodeling of acyl groups of lipophilic alcohols present in acidic cellular compartments. Catalyzes hydrolysis of the ester bond of the fatty acyl group attached at sn-1 or sn-2 position of phospholipids (phospholipase A1 or A2 activity) and transfer it to the hydroxyl group at the first carbon of lipophilic alcohols (O-acyltransferase activity). Among preferred fatty acyl donors are phosphatidylcholines, phosphatidylethanolamines, phosphatidylglycerols and phosphatidylserines. Favors sn-2 over sn-1 deacylation of unsaturated fatty acyl groups of phosphatidylcholines, phosphatidylethanolamines, and phosphatidylglycerols. Among preferred fatty acyl acceptors are natural lipophilic alcohols including short-chain ceramide N-acetyl-sphingosine (C2 ceramide), alkylacylglycerols, monoacylglycerols, and acylethanolamides such as anandamide and oleoylethanolamide. Selectively hydrolyzes the sn-1 fatty acyl group of truncated oxidized phospholipids and may play a role in detoxification of reactive oxidized phospholipids during oxidative stress. Required for normal phospholipid degradation in alveolar macrophages with potential implications in the clearance of pulmonary surfactant, which is mainly composed of dipalmitoylphosphatidylcholine (1,2-dihexadecanoyl-sn-glycero-3-phosphocholine). Involved in the first step of bis(monoacylglycero)phosphate (BMP) de novo synthesis from phosphatidylglycerol (1,2-diacyl-sn-glycero-3-phospho-(1'-sn-glycerol), PG). BMP is an important player in cargo sorting and degradation, regulation of cellular cholesterol levels and intercellular communication. At neutral pH, hydrolyzes the sn-1 fatty acyl group of the lysophosphatidylcholines. The chain is Lysosomal phospholipase A and acyltransferase from Homo sapiens (Human).